The primary structure comprises 729 residues: Transient receptor potential cation channel subfamily V member 5 (729 aa).

Topologically, residues 1-327 (MGGFLPKAEG…SFKWNKYGRP (327 aa)) are cytoplasmic. ANK repeat units follow at residues 44 to 74 (ILES…DVRQ), 78 to 107 (LGET…ELVF), 116 to 145 (AGQT…SVSA), 162 to 191 (FGEH…DIRA), 195 to 228 (LGNT…HGDH), and 239 to 268 (QGLT…HIQW). The helical transmembrane segment at 328–348 (YFCILAALYLLYMICFTTCCV) threads the bilayer. Residues 349 to 385 (YRPLKFRGGNRTHSRDITILQQKLLQEAYETREDIIR) lie on the Extracellular side of the membrane. The N-linked (GlcNAc...) asparagine glycan is linked to Asn-358. Residues 386-408 (LVGELVSIVGAVIILLLEIPDIF) traverse the membrane as a helical segment. The Cytoplasmic segment spans residues 409–419 (RVGASRYFGKT). Residues 420 to 442 (ILGGPFHVIIITYASLVLVTMVM) form a helical membrane-spanning segment. The Extracellular portion of the chain corresponds to 443-448 (RLTNTN). Residues 449 to 469 (GEVVPMSFALVLGWCSVMYFT) form a helical membrane-spanning segment. The Cytoplasmic segment spans residues 470 to 492 (RGFQMLGPFTIMIQKMIFGDLMR). The helical transmembrane segment at 493 to 513 (FCWLMAVVILGFASAFYIIFQ) threads the bilayer. Positions 524-544 (YDYPMALFTTFELFLTVIDAP) form an intramembrane region, pore-forming. Asp-542 lines the Ca(2+) pocket. The chain crosses the membrane as a helical span at residues 557-577 (IVNFAFTIIATLLMLNLFIAM). The Cytoplasmic segment spans residues 578–729 (MGDTHWRVAQ…EGDGEEVYHF (152 aa)). The segment at 598–602 (VATTV) is interaction with S100A10. The interval 650 to 653 (VFKN) is involved in Ca(2+)-dependent inactivation. Positions 654–665 (SDKEDDQEHPSE) are enriched in basic and acidic residues. The disordered stretch occupies residues 654–675 (SDKEDDQEHPSEKQPSGAESGT). Position 685 is a phosphothreonine (Thr-685). Ser-689 carries the post-translational modification Phosphoserine. The tract at residues 700 to 729 (GWEILRQNTLGHLNLGLNLSEGDGEEVYHF) is involved in Ca(2+)-dependent inactivation.

The protein belongs to the transient receptor (TC 1.A.4) family. TrpV subfamily. TRPV5 sub-subfamily. In terms of assembly, homotetramer and probably heterotetramer with TRPV6. Interacts with TRPV6. Interacts with S100A10 and probably with the ANAX2-S100A10 heterotetramer. The interaction with S100A10 is required for the trafficking to the plasma membrane. Interacts with calmodulin. Interacts with BSPRY, which results in its inactivation. In terms of processing, glycosylated. As to expression, expressed at high levels in kidney, small intestine and pancreas, and at lower levels in testis, prostate, placenta, brain, colon and rectum.

It localises to the apical cell membrane. The catalysed reaction is Ca(2+)(in) = Ca(2+)(out). With respect to regulation, activated by WNK3. Constitutively active calcium selective cation channel thought to be involved in Ca(2+) reabsorption in kidney and intestine. Required for normal Ca(2+) reabsorption in the kidney distal convoluted tubules. The channel is activated by low internal calcium level and the current exhibits an inward rectification. A Ca(2+)-dependent feedback regulation includes fast channel inactivation and slow current decay. Heteromeric assembly with TRPV6 seems to modify channel properties. TRPV5-TRPV6 heteromultimeric concatemers exhibit voltage-dependent gating. This chain is Transient receptor potential cation channel subfamily V member 5 (TRPV5), found in Homo sapiens (Human).